Reading from the N-terminus, the 159-residue chain is Ribosomal RNA large subunit methyltransferase H (159 aa).

S-adenosyl-L-methionine-binding positions include L76, G108, and 127-132 (FSKMTF).

This sequence belongs to the RNA methyltransferase RlmH family. Homodimer.

The protein localises to the cytoplasm. The catalysed reaction is pseudouridine(1915) in 23S rRNA + S-adenosyl-L-methionine = N(3)-methylpseudouridine(1915) in 23S rRNA + S-adenosyl-L-homocysteine + H(+). Its function is as follows. Specifically methylates the pseudouridine at position 1915 (m3Psi1915) in 23S rRNA. This chain is Ribosomal RNA large subunit methyltransferase H, found in Clostridium botulinum (strain Alaska E43 / Type E3).